The sequence spans 408 residues: 3-hydroxy-3-methylglutaryl-coenzyme A reductase (408 aa).

Active-site charge relay system residues include Glu-101 and Asp-307. Catalysis depends on His-403, which acts as the Proton donor.

The protein belongs to the HMG-CoA reductase family.

The catalysed reaction is (R)-mevalonate + 2 NADP(+) + CoA = (3S)-3-hydroxy-3-methylglutaryl-CoA + 2 NADPH + 2 H(+). Its pathway is metabolic intermediate biosynthesis; (R)-mevalonate biosynthesis; (R)-mevalonate from acetyl-CoA: step 3/3. In terms of biological role, converts HMG-CoA to mevalonate. The chain is 3-hydroxy-3-methylglutaryl-coenzyme A reductase (hmgA) from Pyrococcus abyssi (strain GE5 / Orsay).